Here is a 140-residue protein sequence, read N- to C-terminus: Dehydratase ustZ (140 aa).

The 96-residue stretch at 18–113 folds into the EthD domain; the sequence is PGISTEDYRN…GPDHEKFADT (96 aa).

This sequence belongs to the tpcK family.

The enzyme catalyses naphtopyrone YWA1 = norrubrofusarin + H2O + H(+). It participates in secondary metabolite biosynthesis. Dehydratase; part of the gene cluster that mediates the biosynthesis of ustilaginoidins, dimeric gamma-naphthopyrones isolated from different fungal species. The first step in the biosynthesis of ustilaginoidins is the production of gamma-naphthopyrone precursor YWA1 by the non-reducing polyketide synthase ustP, via condensation of one acetyl-CoA starter unit with 6 malonyl-CoA units. YWA1 is then probably substrate of the ustZ to yield norrubrofusarin via a dehydration reaction. A key enzyme in the biosynthetic pathway is the laccase ustL, which catalyzes the oxidative dimerization of norrubrofusarin to ustilaginoidin A. It can produce the M- and P-atropisomers in varying amounts, depending on the reaction conditions. For the biosynthesis of 3-methylustilaginoid in derivatives such as chaetochromin A, a methylated derivative of YWA1 is required. The C-methylation is considered to be catalyzed by ustM, the phosphopantetheine attachment site of which indicates that it acts on the growing polyketide chain before release of the product. For the biosynthesis of chaetochromin A, it is assumed that saturation of the D2 double bond takes place before dimerization, and is probably catalyzed by an external reductase because no candidate gene was identified within the cluster. The polypeptide is Dehydratase ustZ (Ustilaginoidea virens (Rice false smut fungus)).